A 104-amino-acid chain; its full sequence is 11 kDa late embryogenesis abundant protein (104 aa).

The segment covering 1–24 (MQSGKNAAASAKETAANVAASAKA) has biased composition (low complexity). Residues 1–104 (MQSGKNAAAS…TGHRTGTGGI (104 aa)) form a disordered region. A compositionally biased stretch (basic and acidic residues) spans 25–74 (GMEKTKASLQEKGEKMTAHDPMQKEMAREKKEERKHEAEYEKQAAKEHNA). Over residues 75-89 (AQKQTTGIGTGTHSY) the composition is skewed to polar residues.

Belongs to the LEA type 1 family. As to expression, maximally expressed in dry seeds. Also present in mid-maturation embryos.

Its function is as follows. LEA proteins are late embryonic proteins abundant in higher plant seed embryos. They may play an essential role in seed survival and in controlling water exchanges during seed desiccation and imbibition. The chain is 11 kDa late embryogenesis abundant protein from Helianthus annuus (Common sunflower).